A 259-amino-acid polypeptide reads, in one-letter code: Polycomb group RING finger protein 1 (259 aa).

The RING-type zinc-finger motif lies at 45-84 (CYLCAGYFIDATTITECLHTFCKSCIVKYLQTSKYCPLCN).

Component of a PRC1-like complex.

It localises to the nucleus. Component of a Polycomb group (PcG) multiprotein PRC1-like complex, a complex class required to maintain the transcriptionally repressive state of many genes, including Hox genes, throughout development. PcG PRC1 complex acts via chromatin remodeling and modification of histones; it mediates monoubiquitination of histone H2A 'Lys-119', rendering chromatin heritably changed in its expressibility. This Xenopus laevis (African clawed frog) protein is Polycomb group RING finger protein 1 (pcgf1).